The primary structure comprises 96 residues: Glutamyl-tRNA(Gln) amidotransferase subunit C (96 aa).

The protein belongs to the GatC family. Heterotrimer of A, B and C subunits.

It catalyses the reaction L-glutamyl-tRNA(Gln) + L-glutamine + ATP + H2O = L-glutaminyl-tRNA(Gln) + L-glutamate + ADP + phosphate + H(+). The enzyme catalyses L-aspartyl-tRNA(Asn) + L-glutamine + ATP + H2O = L-asparaginyl-tRNA(Asn) + L-glutamate + ADP + phosphate + 2 H(+). Its function is as follows. Allows the formation of correctly charged Asn-tRNA(Asn) or Gln-tRNA(Gln) through the transamidation of misacylated Asp-tRNA(Asn) or Glu-tRNA(Gln) in organisms which lack either or both of asparaginyl-tRNA or glutaminyl-tRNA synthetases. The reaction takes place in the presence of glutamine and ATP through an activated phospho-Asp-tRNA(Asn) or phospho-Glu-tRNA(Gln). The sequence is that of Glutamyl-tRNA(Gln) amidotransferase subunit C from Neisseria meningitidis serogroup A / serotype 4A (strain DSM 15465 / Z2491).